The following is a 362-amino-acid chain: Sphingolipid delta(4)-desaturase (362 aa).

Positions 1–10 are enriched in low complexity; sequence MAESTATTTA. Residues 1 to 20 are disordered; that stretch reads MAESTATTTAVPPPAEESWN. 3 helical membrane-spanning segments follow: residues 60–80, 90–110, and 121–143; these read PLTK…AYLL, FFLT…LAIH, and TLYN…AASF. The Histidine box-1 motif lies at 110–114; sequence HELSH. A Histidine box-2 motif is present at residues 147–151; it reads HMEHH. 3 consecutive transmembrane segments (helical) span residues 169–189, 200–220, and 228–248; these read LILF…LLFY, PFTL…YLVV, and LAYF…AGHF. A Histidine box-3 motif is present at residues 290-294; it reads HIEHH.

Belongs to the fatty acid desaturase type 1 family. DEGS subfamily.

The protein localises to the membrane. It catalyses the reaction an N-acylsphinganine + 2 Fe(II)-[cytochrome b5] + O2 + 2 H(+) = an N-acylsphing-4-enine + 2 Fe(III)-[cytochrome b5] + 2 H2O. It participates in lipid metabolism; sphingolipid metabolism. Its function is as follows. Delta(4)-fatty-acid desaturase which introduces a double bond at the 4-position in the long-chain base (LCB) of ceramides. Required for sphingosine biosynthesis. This is Sphingolipid delta(4)-desaturase (dsd1) from Schizosaccharomyces pombe (strain 972 / ATCC 24843) (Fission yeast).